Here is a 207-residue protein sequence, read N- to C-terminus: dTTP/UTP pyrophosphatase (207 aa).

Asp79 (proton acceptor) is an active-site residue.

The protein belongs to the Maf family. YhdE subfamily. Requires a divalent metal cation as cofactor.

The protein resides in the cytoplasm. The enzyme catalyses dTTP + H2O = dTMP + diphosphate + H(+). It carries out the reaction UTP + H2O = UMP + diphosphate + H(+). Its function is as follows. Nucleoside triphosphate pyrophosphatase that hydrolyzes dTTP and UTP. May have a dual role in cell division arrest and in preventing the incorporation of modified nucleotides into cellular nucleic acids. This chain is dTTP/UTP pyrophosphatase, found in Nitrobacter hamburgensis (strain DSM 10229 / NCIMB 13809 / X14).